An 84-amino-acid polypeptide reads, in one-letter code: Putative membrane protein insertion efficiency factor (84 aa).

Belongs to the UPF0161 family.

The protein resides in the cell inner membrane. In terms of biological role, could be involved in insertion of integral membrane proteins into the membrane. This Shewanella pealeana (strain ATCC 700345 / ANG-SQ1) protein is Putative membrane protein insertion efficiency factor.